Here is a 160-residue protein sequence, read N- to C-terminus: Small ribosomal subunit protein uS7 (160 aa).

The protein belongs to the universal ribosomal protein uS7 family. Part of the 30S ribosomal subunit. Contacts proteins S9 and S11.

Functionally, one of the primary rRNA binding proteins, it binds directly to 16S rRNA where it nucleates assembly of the head domain of the 30S subunit. Is located at the subunit interface close to the decoding center, probably blocks exit of the E-site tRNA. The chain is Small ribosomal subunit protein uS7 from Rickettsia massiliae (strain Mtu5).